The sequence spans 104 residues: Pterin-4-alpha-carbinolamine dehydratase (104 aa).

Position 2 is an N-acetylalanine (A2). Residues 61 to 63 (DHH) and 78 to 81 (STHE) contribute to the substrate site.

The protein belongs to the pterin-4-alpha-carbinolamine dehydratase family. In terms of assembly, homotetramer and homodimer. As to expression, the major tissues expressing cDcoH are hypothalamus, kidney and liver.

It is found in the cytoplasm. The protein resides in the nucleus. The enzyme catalyses (4aS,6R)-4a-hydroxy-L-erythro-5,6,7,8-tetrahydrobiopterin = (6R)-L-erythro-6,7-dihydrobiopterin + H2O. Functionally, involved in tetrahydrobiopterin biosynthesis. Seems to both prevent the formation of 7-pterins and accelerate the formation of quinonoid-BH2. Coactivator for HNF1A-dependent transcription. Regulates the dimerization of homeodomain protein HNF1A and enhances its transcriptional activity. Also acts as a coactivator for HNF1B-dependent transcription. In Gallus gallus (Chicken), this protein is Pterin-4-alpha-carbinolamine dehydratase (PCBD1).